A 238-amino-acid chain; its full sequence is MIYAGILAGGIGSRMGNVPLPKQFLDIDNKPILIHTIEKFILVSEFNEIIIATPAQWISHTQDILKKYNITDQRVKVVAGGTDRNETIMNIIDHIRNVNGINNDDVIVTHDAVRPFLTQRIIKENIEVAAKYGAVDTVIEAIDTIVMSKDKQNIHSIPVRNEMYQGQTPQSFNIKLLQDSYRALSSEQKEILSDACKIIVESGHAVKLVRGELYNIKVTTPYDLKVANAIIQGDIADD.

CTP-binding positions include 7–10 (LAGG) and 81–87 (GTDRNET).

Belongs to the IspD/TarI cytidylyltransferase family. TarI subfamily. As to quaternary structure, heterodimer together with TarJ.

The catalysed reaction is D-ribitol 5-phosphate + CTP + H(+) = CDP-L-ribitol + diphosphate. It participates in cell wall biogenesis; poly(ribitol phosphate) teichoic acid biosynthesis. Catalyzes the transfer of the cytidylyl group of CTP to D-ribitol 5-phosphate. In Staphylococcus aureus (strain NCTC 8325 / PS 47), this protein is Ribitol-5-phosphate cytidylyltransferase 2.